The sequence spans 324 residues: tRNA (cytidine(32)/guanosine(34)-2'-O)-methyltransferase (324 aa).

S-adenosyl-L-methionine-binding residues include Gly-53, Trp-55, Asp-75, Asp-91, and Asp-116. The active-site Proton acceptor is the Lys-156. Positions Asp-221–Asp-240 are required for binding to WDR6.

It belongs to the class I-like SAM-binding methyltransferase superfamily. RNA methyltransferase RlmE family. TRM7 subfamily. In terms of assembly, interacts with WDR6; the interaction is direct, and required for 2'-O-methylation of position 34 in substrate tRNAs.

The protein localises to the cytoplasm. The protein resides in the nucleus. It carries out the reaction cytidine(32)/guanosine(34) in tRNA + 2 S-adenosyl-L-methionine = 2'-O-methylcytidine(32)/2'-O-methylguanosine(34) in tRNA + 2 S-adenosyl-L-homocysteine + 2 H(+). Methylates the 2'-O-ribose of nucleotides at positions 32 and 34 of the tRNA anticodon loop of substrate tRNAs. Requisite for faithful cytoplasmic translation. Requires THADA for methylation of the cytidine at position 32 of the anticodon loop of substrate tRNAs. Requires WDR6 for methylation of the nucleotide at position 34 of the anticodon loop of substrate tRNAs. Promotes translation efficiency of the UUU codon. Plays a role in neurogenesis. Required for expression of genes involved in neurogenesis and mitochondrial translation and energy generation. Requisite for RNA-mediated gene silencing. May modify position 32 in tRNA(Arg(ACG)), tRNA(Gln(CUG)), tRNA(Leu(UAA)), tRNA(Leu(UAG)), tRNA(Leu(AAG)), tRNA(Leu(CAG)), tRNA(Phe(GAA)), tRNA(Trp(CCA)) and tRNA(Val(AAC)), and position 34 in tRNA(Phe(GAA)), tRNA(Leu(CAA)), tRNA(Leu(UAA)), tRNA(Sec(UCA)), and tRNA(Trp(CCA)). The polypeptide is tRNA (cytidine(32)/guanosine(34)-2'-O)-methyltransferase (Mus musculus (Mouse)).